The following is a 322-amino-acid chain: uncharacterized protein (322 aa).

Residues 205 to 286 adopt a coiled-coil conformation; that stretch reads QEIKNAHAAL…LKKAISEAVQ (82 aa). Composition is skewed to basic and acidic residues over residues 254–281 and 290–299; these read EKEEELNKKDKEKEEETEKEGEKLKKAI and DRIEAIEKSR. The disordered stretch occupies residues 254-322; it reads EKEEELNKKD…VQKSIWSGLF (69 aa). Residues 310 to 322 are compositionally biased toward polar residues; that stretch reads SEQVQKSIWSGLF.

The protein to B.subtilis XkdF.

This is an uncharacterized protein from Bacillus subtilis (strain 168).